Reading from the N-terminus, the 807-residue chain is F-box protein YLR352W (807 aa).

The F-box domain occupies 220 to 266 (LNDCIDLPSHVLWKILKMLPELQKLDLSHTSIDDSTLYHGIPHWKNL). A compositionally biased stretch (basic and acidic residues) spans 607-616 (DNNSHVEDSQ). 2 disordered regions span residues 607–647 (DNNS…NPFA) and 716–739 (HLFE…EHSS). Polar residues-rich tracts occupy residues 627 to 644 (SLLS…SSAN) and 723 to 736 (SRSG…LTGE).

In terms of assembly, interacts with SKP1 and CDC53. Component of the probable SCF(YBR352W) complex containing CDC53, SKP1, RBX1 and YBR352W.

It functions in the pathway protein modification; protein ubiquitination. Its function is as follows. Substrate recognition component of a SCF (SKP1-CUL1-F-box protein) E3 ubiquitin-protein ligase complex which mediates the ubiquitination and subsequent proteasomal degradation of target proteins. Probably recognizes and binds to phosphorylated target proteins. In Saccharomyces cerevisiae (strain ATCC 204508 / S288c) (Baker's yeast), this protein is F-box protein YLR352W.